The sequence spans 469 residues: Diaminopimelate decarboxylase (469 aa).

The tract at residues Met-1–Ser-23 is disordered. Lys-93 carries the post-translational modification N6-(pyridoxal phosphate)lysine. Residues Gly-279 and Glu-321–Arg-324 each bind pyridoxal 5'-phosphate. Substrate is bound by residues Arg-324, Arg-361, and Tyr-365. Cys-392 functions as the Proton donor in the catalytic mechanism. Substrate contacts are provided by Glu-393 and Tyr-421. Residue Tyr-421 coordinates pyridoxal 5'-phosphate.

It belongs to the Orn/Lys/Arg decarboxylase class-II family. LysA subfamily. Homodimer. Requires pyridoxal 5'-phosphate as cofactor.

It catalyses the reaction meso-2,6-diaminopimelate + H(+) = L-lysine + CO2. Its pathway is amino-acid biosynthesis; L-lysine biosynthesis via DAP pathway; L-lysine from DL-2,6-diaminopimelate: step 1/1. In terms of biological role, specifically catalyzes the decarboxylation of meso-diaminopimelate (meso-DAP) to L-lysine. This Synechocystis sp. (strain ATCC 27184 / PCC 6803 / Kazusa) protein is Diaminopimelate decarboxylase.